The chain runs to 425 residues: Serine--tRNA ligase (425 aa).

Disordered regions lie at residues 43–68 (QRSSLQAEGNRIGKEVGQRIQQGSDP) and 108–131 (LPNLPSPDCPEGRDENDNQERHCW). The segment covering 117–131 (PEGRDENDNQERHCW) has biased composition (basic and acidic residues). 233–235 (TAE) is an L-serine binding site. Residue 264–266 (RRE) coordinates ATP. L-serine is bound at residue Glu-287. 351 to 354 (EISS) is a binding site for ATP. Ser-385 contributes to the L-serine binding site.

The protein belongs to the class-II aminoacyl-tRNA synthetase family. Type-1 seryl-tRNA synthetase subfamily. In terms of assembly, homodimer. The tRNA molecule binds across the dimer.

Its subcellular location is the cytoplasm. It catalyses the reaction tRNA(Ser) + L-serine + ATP = L-seryl-tRNA(Ser) + AMP + diphosphate + H(+). The catalysed reaction is tRNA(Sec) + L-serine + ATP = L-seryl-tRNA(Sec) + AMP + diphosphate + H(+). It participates in aminoacyl-tRNA biosynthesis; selenocysteinyl-tRNA(Sec) biosynthesis; L-seryl-tRNA(Sec) from L-serine and tRNA(Sec): step 1/1. Functionally, catalyzes the attachment of serine to tRNA(Ser). Is also able to aminoacylate tRNA(Sec) with serine, to form the misacylated tRNA L-seryl-tRNA(Sec), which will be further converted into selenocysteinyl-tRNA(Sec). This chain is Serine--tRNA ligase, found in Prochlorococcus marinus (strain MIT 9303).